Consider the following 209-residue polypeptide: Scoloptoxin SSD346 (209 aa).

Residues 1–22 form the signal peptide; that stretch reads NILLSSTLFVLLMFQIIGSGLG.

In terms of processing, contains 2 disulfide bonds. As to expression, expressed by the venom gland.

It localises to the secreted. May act as a voltage-gated calcium channel inhibitor. The sequence is that of Scoloptoxin SSD346 from Scolopendra dehaani (Thai centipede).